We begin with the raw amino-acid sequence, 399 residues long: Chalcone synthase 2 (399 aa).

Residue Cys166 is part of the active site.

It belongs to the thiolase-like superfamily. Chalcone/stilbene synthases family.

The enzyme catalyses (E)-4-coumaroyl-CoA + 3 malonyl-CoA + 3 H(+) = 2',4,4',6'-tetrahydroxychalcone + 3 CO2 + 4 CoA. The protein operates within secondary metabolite biosynthesis; flavonoid biosynthesis. Functionally, the primary product of this enzyme is 4,2',4',6'-tetrahydroxychalcone (also termed naringenin-chalcone or chalcone) which can under specific conditions spontaneously isomerize into naringenin. Substrate preference is feruloyl-CoA = caffeoyl-CoA &gt;&gt; cinnamoyl-CoA. The polypeptide is Chalcone synthase 2 (CHS2) (Hordeum vulgare (Barley)).